Reading from the N-terminus, the 140-residue chain is Large ribosomal subunit protein uL11 (140 aa).

It belongs to the universal ribosomal protein uL11 family. In terms of assembly, part of the ribosomal stalk of the 50S ribosomal subunit. Interacts with L10 and the large rRNA to form the base of the stalk. L10 forms an elongated spine to which L12 dimers bind in a sequential fashion forming a multimeric L10(L12)X complex. Post-translationally, one or more lysine residues are methylated.

Its function is as follows. Forms part of the ribosomal stalk which helps the ribosome interact with GTP-bound translation factors. The protein is Large ribosomal subunit protein uL11 of Staphylococcus aureus (strain bovine RF122 / ET3-1).